The chain runs to 334 residues: L-lactate dehydrogenase B-B chain (334 aa).

NAD(+)-binding positions include 30 to 58 (GQVG…VEDK) and arginine 100. The substrate site is built by arginine 107, asparagine 139, and arginine 170. Asparagine 139 is a binding site for NAD(+). Histidine 194 functions as the Proton acceptor in the catalytic mechanism. Threonine 249 contributes to the substrate binding site.

It belongs to the LDH/MDH superfamily. LDH family. Homotetramer.

It localises to the cytoplasm. The catalysed reaction is (S)-lactate + NAD(+) = pyruvate + NADH + H(+). Its pathway is fermentation; pyruvate fermentation to lactate; (S)-lactate from pyruvate: step 1/1. This chain is L-lactate dehydrogenase B-B chain, found in Danio rerio (Zebrafish).